We begin with the raw amino-acid sequence, 132 residues long: Small ribosomal subunit protein uS8 (132 aa).

The protein belongs to the universal ribosomal protein uS8 family. In terms of assembly, part of the 30S ribosomal subunit. Contacts proteins S5 and S12.

Functionally, one of the primary rRNA binding proteins, it binds directly to 16S rRNA central domain where it helps coordinate assembly of the platform of the 30S subunit. This is Small ribosomal subunit protein uS8 from Thermoanaerobacter pseudethanolicus (strain ATCC 33223 / 39E) (Clostridium thermohydrosulfuricum).